Consider the following 469-residue polypeptide: Cysteine--tRNA ligase (469 aa).

Residue Cys33 coordinates Zn(2+). Positions 35-45 match the 'HIGH' region motif; sequence ATVQGLPHIGH. Zn(2+) is bound by residues Cys211, His236, and Glu240. Residues 267 to 271 carry the 'KMSKS' region motif; the sequence is KMSKS. Lys270 lines the ATP pocket.

The protein belongs to the class-I aminoacyl-tRNA synthetase family. In terms of assembly, monomer. The cofactor is Zn(2+).

The protein resides in the cytoplasm. It catalyses the reaction tRNA(Cys) + L-cysteine + ATP = L-cysteinyl-tRNA(Cys) + AMP + diphosphate. This is Cysteine--tRNA ligase (cysS) from Mycobacterium bovis (strain ATCC BAA-935 / AF2122/97).